The chain runs to 384 residues: Farnesyl pyrophosphate synthase 1, mitochondrial (384 aa).

3 residues coordinate isopentenyl diphosphate: Lys89, Arg92, and Gln128. Asp135 and Asp139 together coordinate Mg(2+). Arg144 is a dimethylallyl diphosphate binding site. An isopentenyl diphosphate-binding site is contributed by Arg145. Residues Lys232, Thr233, Gln271, Lys288, and Lys297 each contribute to the dimethylallyl diphosphate site.

It belongs to the FPP/GGPP synthase family. Requires Mg(2+) as cofactor. In terms of tissue distribution, the FPS1L mRNA accumulates preferentially in inflorescences, whereas the FPS1S mRNA is predominantly expressed in roots and inflorescences.

The protein resides in the mitochondrion. It localises to the cytoplasm. The catalysed reaction is isopentenyl diphosphate + dimethylallyl diphosphate = (2E)-geranyl diphosphate + diphosphate. The enzyme catalyses isopentenyl diphosphate + (2E)-geranyl diphosphate = (2E,6E)-farnesyl diphosphate + diphosphate. Its pathway is isoprenoid biosynthesis; farnesyl diphosphate biosynthesis; farnesyl diphosphate from geranyl diphosphate and isopentenyl diphosphate: step 1/1. It participates in isoprenoid biosynthesis; geranyl diphosphate biosynthesis; geranyl diphosphate from dimethylallyl diphosphate and isopentenyl diphosphate: step 1/1. Functionally, catalyzes the sequential condensation of isopentenyl pyrophosphate with the allylic pyrophosphates, dimethylallyl pyrophosphate, and then with the resultant geranylpyrophosphate to the ultimate product farnesyl pyrophosphate. This Arabidopsis thaliana (Mouse-ear cress) protein is Farnesyl pyrophosphate synthase 1, mitochondrial (FPS1).